The sequence spans 158 residues: Transcription elongation factor GreA (158 aa).

The stretch at 53 to 73 (EQQSFIEGRIQEIEGKLSNAQ) forms a coiled coil.

This sequence belongs to the GreA/GreB family.

Functionally, necessary for efficient RNA polymerase transcription elongation past template-encoded arresting sites. The arresting sites in DNA have the property of trapping a certain fraction of elongating RNA polymerases that pass through, resulting in locked ternary complexes. Cleavage of the nascent transcript by cleavage factors such as GreA or GreB allows the resumption of elongation from the new 3'terminus. GreA releases sequences of 2 to 3 nucleotides. This is Transcription elongation factor GreA from Halorhodospira halophila (strain DSM 244 / SL1) (Ectothiorhodospira halophila (strain DSM 244 / SL1)).